The primary structure comprises 22 residues: Mu-conotoxin CnIIIA (22 aa).

Cystine bridges form between Cys-3/Cys-15, Cys-4/Cys-21, and Cys-10/Cys-22. At Cys-22 the chain carries Cysteine amide.

The protein belongs to the conotoxin M superfamily. Expressed by the venom duct. Has not been isolated from the crude venom.

The protein localises to the secreted. Mu-conotoxins block voltage-gated sodium channels (Nav). This synthetic toxin moderately blocks rNav1.1/SCN1A, rNav1.2/SCN2A, rNav1.3/SCN3A, rNav1.4/SCN4A, rNav1.5/SCN5A, and mNav1.6/SCN8A. This block is very slowly reversible. Causes seizures when injected intracranially into mice. This Conus consors (Singed cone) protein is Mu-conotoxin CnIIIA.